The following is a 160-amino-acid chain: Nutritionally-regulated adipose and cardiac enriched protein homolog (160 aa).

The tract at residues 1-69 (MRTAAGAVSP…AKPQRTSRRV (69 aa)) is disordered. 2 stretches are compositionally biased toward basic and acidic residues: residues 12-25 (SRPE…KNEE) and 33-42 (CRAEREDNRK). Residues 101–121 (GGSLLLQLCVCVLLVLALGLY) traverse the membrane as a helical segment.

Its subcellular location is the cell membrane. In Homo sapiens (Human), this protein is Nutritionally-regulated adipose and cardiac enriched protein homolog (NRAC).